The following is a 496-amino-acid chain: Probable malate:quinone oxidoreductase (496 aa).

It belongs to the MQO family. FAD serves as cofactor.

It carries out the reaction (S)-malate + a quinone = a quinol + oxaloacetate. It functions in the pathway carbohydrate metabolism; tricarboxylic acid cycle; oxaloacetate from (S)-malate (quinone route): step 1/1. This Prochlorococcus marinus (strain MIT 9313) protein is Probable malate:quinone oxidoreductase.